The following is a 450-amino-acid chain: MLRLLIGLLLMSFISLQSASWQEPLRVSIEFVDLPKKIIRFPAHDLKVGEFGFVVTKLSDYEIVNSEVVIIAVENGVATAKFKAFESMKQSHLPTPRMVAKKGDLVYFRQFNNQAFLIAPNDELYEQIRATNTDINFISSDLLVTFLNGFDPKIANLRKACNVYSVGVIYIVTTNTLNILSCESFEILEKRELDTSGVTKTSTPFFSRVEGIDAGTLGKLFSGSQSKNYFAYYDALVKKEKRKEVRIEKKEERIDARENKREIKQEAIKEPKKANQGTENAPTLEEKNYQKAERKFDAKEERRRSRDERKKTKATKKAMEFEEREKEHDERDEKETEERRKALEMDKGNEKVNAKENEREINQESANEPSSENNATLKDTENTSVLKESAAKKEAPKPSSKEEKRRLKEEKKKAKAEQRAREFEQRAREHQERDEKELEERRKALEMNKK.

Composition is skewed to basic and acidic residues over residues 262 to 273, 284 to 310, and 317 to 362; these read EIKQEAIKEPKK, LEEKNYQKAERKFDAKEERRRSRDERK, and KAME…REIN. The segment at 262–450 is disordered; sequence EIKQEAIKEP…RRKALEMNKK (189 aa). Residues 363–386 show a composition bias toward polar residues; sequence QESANEPSSENNATLKDTENTSVL. A compositionally biased stretch (basic and acidic residues) spans 389-450; it reads SAAKKEAPKP…RRKALEMNKK (62 aa).

Its subcellular location is the cell surface. Binds plasminogen, specifically, and in a concentration and lysine-dependent manner. Plasminogen is the precursor of plasmin, a serine protease that cleaves fibrin, fibronectin, laminin and vitronectin. Acquisition of plasminogen/plasmin could enable H.pylori to degrade host components. The protein is Plasminogen-binding protein PgbA (pgbA) of Helicobacter pylori (strain J99 / ATCC 700824) (Campylobacter pylori J99).